Consider the following 942-residue polypeptide: Protein inturned (942 aa).

The segment covering 1 to 13 (MADPARRDPRGRA) has biased composition (basic and acidic residues). Disordered regions lie at residues 1 to 54 (MADP…LEPE) and 129 to 150 (PKRH…KHQS). A compositionally biased stretch (acidic residues) spans 22–32 (SQEEEEEESDS). The span at 33–48 (DAGASSLGSCSSASSD) shows a compositional bias: low complexity. Residues 138–150 (SNTGPVSILKHQS) show a composition bias toward polar residues. The PDZ domain maps to 189–267 (LVGVIHQTKW…PMQVKLTFEN (79 aa)). A phosphoserine mark is found at Ser674 and Ser678. The disordered stretch occupies residues 707-752 (KARKPSPSRIGGGREPGEGEENVGLSPHTTPDTVRKQRESEGSDDN).

It belongs to the inturned family. Component of the CPLANE (ciliogenesis and planar polarity effectors) complex, composed of INTU, FUZ and WDPCP. Interacts with CPLANE1. Interacts with NPHP4 and DAAM1; INTU is mediating the interaction between NPHP4 and DAAM1.

Its subcellular location is the cytoplasm. It is found in the cell surface. It localises to the cytoskeleton. The protein localises to the cilium basal body. The protein resides in the microtubule organizing center. Its subcellular location is the centrosome. It is found in the centriole. In terms of biological role, plays a key role in ciliogenesis and embryonic development. Regulator of cilia formation by controlling the organization of the apical actin cytoskeleton and the positioning of the basal bodies at the apical cell surface, which in turn is essential for the normal orientation of elongating ciliary microtubules. Plays a key role in definition of cell polarity via its role in ciliogenesis but not via conversion extension. Has an indirect effect on hedgehog signaling. Proposed to function as core component of the CPLANE (ciliogenesis and planar polarity effectors) complex involved in the recruitment of peripheral IFT-A proteins to basal bodies. Required for recruitment of CPLANE2 to the mother centriole. Binds phosphatidylinositol 3-phosphate with highest affinity, followed by phosphatidylinositol 4-phosphate and phosphatidylinositol 5-phosphate. The sequence is that of Protein inturned (Intu) from Rattus norvegicus (Rat).